The following is a 240-amino-acid chain: Transmembrane protein 65 (240 aa).

The transit peptide at 1–61 (MSRLLPLLRS…RRLGTHPKKE (61 aa)) directs the protein to the mitochondrion. At 62–110 (PMEALNTAQGARDFIYSLHSTERSCLLKELHRFESIAIAQEKLEAPPPT) the chain is on the cytoplasmic side. A helical transmembrane segment spans residues 111-131 (PGQLRYVFIHNAIPFIGFGFL). Residues 132–142 (DNAIMIVAGTH) are Extracellular-facing. Residues 143–165 (IEMSIGIILGISTMAAAALGNLV) traverse the membrane as a helical segment. Topologically, residues 166–209 (SDLAGLGLAGYVEALASRLGLSIPDLTPKQVDMWQTRLSTHLGK) are cytoplasmic. The helical transmembrane segment at 210-230 (AVGVTIGCILGMFPLIFFGGG) threads the bilayer. The Extracellular segment spans residues 231–240 (EEDEKLETKS).

As to quaternary structure, monomer. Homodimer. Interacts with GJA1. Interacts weakly with DSP. Interacts with SCN1B. Predominantly expressed the ventricular tissue (at protein level).

It is found in the cell membrane. The protein localises to the mitochondrion inner membrane. In terms of biological role, essential for maintaining proper cardiac intercalated disk (ICD) structure and function as well as cardiac conduction velocity in the heart. Its association with SCN1B is required for stabilizing the perinexus in the ICD and for localization of GJA1 and SCN5A to the ICD. May regulate the function of the gap junction protein GJA1 and may contribute to the stability and proper localization of GJA1 to cardiac intercalated disk thereby regulating gap junction communication. May also play a role in the regulation of mitochondrial respiration and mitochondrial DNA copy number maintenance. The chain is Transmembrane protein 65 (TMEM65) from Homo sapiens (Human).